A 637-amino-acid chain; its full sequence is DNA gyrase subunit B (637 aa).

The 115-residue stretch at 420 to 534 folds into the Toprim domain; it reads CEIYIVEGDS…EGHVFIAQPP (115 aa). 3 residues coordinate Mg(2+): glutamate 426, aspartate 499, and aspartate 501.

This sequence belongs to the type II topoisomerase GyrB family. Heterotetramer, composed of two GyrA and two GyrB chains. In the heterotetramer, GyrA contains the active site tyrosine that forms a transient covalent intermediate with DNA, while GyrB binds cofactors and catalyzes ATP hydrolysis. The cofactor is Mg(2+). It depends on Mn(2+) as a cofactor. Ca(2+) serves as cofactor.

The protein resides in the cytoplasm. It carries out the reaction ATP-dependent breakage, passage and rejoining of double-stranded DNA.. Functionally, a type II topoisomerase that negatively supercoils closed circular double-stranded (ds) DNA in an ATP-dependent manner to modulate DNA topology and maintain chromosomes in an underwound state. Negative supercoiling favors strand separation, and DNA replication, transcription, recombination and repair, all of which involve strand separation. Also able to catalyze the interconversion of other topological isomers of dsDNA rings, including catenanes and knotted rings. Type II topoisomerases break and join 2 DNA strands simultaneously in an ATP-dependent manner. The sequence is that of DNA gyrase subunit B from Clostridium acetobutylicum (strain ATCC 824 / DSM 792 / JCM 1419 / IAM 19013 / LMG 5710 / NBRC 13948 / NRRL B-527 / VKM B-1787 / 2291 / W).